Reading from the N-terminus, the 59-residue chain is Photosystem II reaction center protein K (59 aa).

Residues 1–22 (MLNIFSLICLNSALHSSSFFFA) constitute a propeptide that is removed on maturation. The chain crosses the membrane as a helical span at residues 38-58 (MPVIPVLFFLLALVWQAAVSF).

The protein belongs to the PsbK family. As to quaternary structure, PSII is composed of 1 copy each of membrane proteins PsbA, PsbB, PsbC, PsbD, PsbE, PsbF, PsbH, PsbI, PsbJ, PsbK, PsbL, PsbM, PsbT, PsbX, PsbY, PsbZ, Psb30/Ycf12, at least 3 peripheral proteins of the oxygen-evolving complex and a large number of cofactors. It forms dimeric complexes.

The protein localises to the plastid. It localises to the chloroplast thylakoid membrane. Its function is as follows. One of the components of the core complex of photosystem II (PSII). PSII is a light-driven water:plastoquinone oxidoreductase that uses light energy to abstract electrons from H(2)O, generating O(2) and a proton gradient subsequently used for ATP formation. It consists of a core antenna complex that captures photons, and an electron transfer chain that converts photonic excitation into a charge separation. The polypeptide is Photosystem II reaction center protein K (Calycanthus floridus var. glaucus (Eastern sweetshrub)).